A 209-amino-acid polypeptide reads, in one-letter code: Probable GTP-binding protein EngB (209 aa).

The 177-residue stretch at 22-198 (TPLEIAFVGR…NRTVGSWFDA (177 aa)) folds into the EngB-type G domain. 2 residues coordinate Mg(2+): Ser37 and Thr59.

It belongs to the TRAFAC class TrmE-Era-EngA-EngB-Septin-like GTPase superfamily. EngB GTPase family. The cofactor is Mg(2+).

Its function is as follows. Necessary for normal cell division and for the maintenance of normal septation. This Neisseria gonorrhoeae protein is Probable GTP-binding protein EngB.